The primary structure comprises 262 residues: tRNA (guanine-N(1)-)-methyltransferase (262 aa).

Residues Gly-112 and 132–137 contribute to the S-adenosyl-L-methionine site; that span reads IGDYIL.

This sequence belongs to the RNA methyltransferase TrmD family. Homodimer.

It localises to the cytoplasm. The catalysed reaction is guanosine(37) in tRNA + S-adenosyl-L-methionine = N(1)-methylguanosine(37) in tRNA + S-adenosyl-L-homocysteine + H(+). In terms of biological role, specifically methylates guanosine-37 in various tRNAs. The polypeptide is tRNA (guanine-N(1)-)-methyltransferase (Desulfatibacillum aliphaticivorans).